The sequence spans 720 residues: Glycine--tRNA ligase beta subunit (720 aa).

This sequence belongs to the class-II aminoacyl-tRNA synthetase family. As to quaternary structure, tetramer of two alpha and two beta subunits.

Its subcellular location is the cytoplasm. It carries out the reaction tRNA(Gly) + glycine + ATP = glycyl-tRNA(Gly) + AMP + diphosphate. This chain is Glycine--tRNA ligase beta subunit, found in Acidovorax sp. (strain JS42).